Reading from the N-terminus, the 420-residue chain is D-tagatose-1,6-bisphosphate aldolase subunit GatZ (420 aa).

This sequence belongs to the GatZ/KbaZ family. GatZ subfamily. Forms a complex with GatY.

The protein operates within carbohydrate metabolism; D-tagatose 6-phosphate degradation; D-glyceraldehyde 3-phosphate and glycerone phosphate from D-tagatose 6-phosphate: step 2/2. Component of the tagatose-1,6-bisphosphate aldolase GatYZ that is required for full activity and stability of the Y subunit. Could have a chaperone-like function for the proper and stable folding of GatY. When expressed alone, GatZ does not show any aldolase activity. Is involved in the catabolism of galactitol. This chain is D-tagatose-1,6-bisphosphate aldolase subunit GatZ, found in Escherichia coli O139:H28 (strain E24377A / ETEC).